The primary structure comprises 292 residues: Diaminopimelate epimerase (292 aa).

Residues Asn13, Gln46, and Asn66 each coordinate substrate. The Proton donor role is filled by Cys75. Substrate-binding positions include 76–77 (GN), Asn170, Asn203, and 221–222 (ER). The active-site Proton acceptor is Cys230. 231-232 (GT) lines the substrate pocket.

The protein belongs to the diaminopimelate epimerase family. As to quaternary structure, homodimer.

It is found in the cytoplasm. The catalysed reaction is (2S,6S)-2,6-diaminopimelate = meso-2,6-diaminopimelate. Its pathway is amino-acid biosynthesis; L-lysine biosynthesis via DAP pathway; DL-2,6-diaminopimelate from LL-2,6-diaminopimelate: step 1/1. Its function is as follows. Catalyzes the stereoinversion of LL-2,6-diaminopimelate (L,L-DAP) to meso-diaminopimelate (meso-DAP), a precursor of L-lysine and an essential component of the bacterial peptidoglycan. The protein is Diaminopimelate epimerase of Acidovorax ebreus (strain TPSY) (Diaphorobacter sp. (strain TPSY)).